The primary structure comprises 72 residues: Small ribosomal subunit protein eS17 (72 aa).

It belongs to the eukaryotic ribosomal protein eS17 family.

The chain is Small ribosomal subunit protein eS17 from Nanoarchaeum equitans (strain Kin4-M).